The primary structure comprises 446 residues: Methionine aminopeptidase 2 (446 aa).

The disordered stretch occupies residues 1 to 91; it reads MAAQVTDALK…PPRVLLSNLF (91 aa). A compositionally biased stretch (acidic residues) spans 36 to 48; it reads EAEDSDDEEEEPV. Residues 59-72 show a composition bias toward basic residues; sequence KKKRKRKKKPKKKA. His-199 contacts substrate. Positions 219, 230, and 299 each coordinate a divalent metal cation. His-307 is a binding site for substrate. A divalent metal cation contacts are provided by Glu-332 and Glu-427.

The protein belongs to the peptidase M24A family. Methionine aminopeptidase eukaryotic type 2 subfamily. Co(2+) serves as cofactor. Requires Zn(2+) as cofactor. It depends on Mn(2+) as a cofactor. Fe(2+) is required as a cofactor.

It localises to the cytoplasm. It carries out the reaction Release of N-terminal amino acids, preferentially methionine, from peptides and arylamides.. Functionally, cotranslationally removes the N-terminal methionine from nascent proteins. The N-terminal methionine is often cleaved when the second residue in the primary sequence is small and uncharged (Met-Ala-, Cys, Gly, Pro, Ser, Thr, or Val). The polypeptide is Methionine aminopeptidase 2 (Sclerotinia sclerotiorum (strain ATCC 18683 / 1980 / Ss-1) (White mold)).